Consider the following 166-residue polypeptide: Ribosome-binding factor A (166 aa).

Residues 122 to 166 form a disordered region; that stretch reads LASTAEHAGDADPYRVDTEDDDDDTDGADAEARSDADVRRGPQSG. The segment covering 128 to 138 has biased composition (basic and acidic residues); the sequence is HAGDADPYRVD. The span at 139–150 shows a compositional bias: acidic residues; that stretch reads TEDDDDDTDGAD. The segment covering 151–166 has biased composition (basic and acidic residues); it reads AEARSDADVRRGPQSG.

This sequence belongs to the RbfA family. In terms of assembly, monomer. Binds 30S ribosomal subunits, but not 50S ribosomal subunits or 70S ribosomes.

Its subcellular location is the cytoplasm. Its function is as follows. One of several proteins that assist in the late maturation steps of the functional core of the 30S ribosomal subunit. Associates with free 30S ribosomal subunits (but not with 30S subunits that are part of 70S ribosomes or polysomes). Required for efficient processing of 16S rRNA. May interact with the 5'-terminal helix region of 16S rRNA. The polypeptide is Ribosome-binding factor A (Saccharopolyspora erythraea (strain ATCC 11635 / DSM 40517 / JCM 4748 / NBRC 13426 / NCIMB 8594 / NRRL 2338)).